The primary structure comprises 603 residues: DNA mismatch repair protein MutL (603 aa).

A compositionally biased stretch (basic and acidic residues) spans E336–K346. Residues E336–I372 form a disordered region.

This sequence belongs to the DNA mismatch repair MutL/HexB family.

In terms of biological role, this protein is involved in the repair of mismatches in DNA. It is required for dam-dependent methyl-directed DNA mismatch repair. May act as a 'molecular matchmaker', a protein that promotes the formation of a stable complex between two or more DNA-binding proteins in an ATP-dependent manner without itself being part of a final effector complex. The sequence is that of DNA mismatch repair protein MutL from Listeria innocua serovar 6a (strain ATCC BAA-680 / CLIP 11262).